Here is a 552-residue protein sequence, read N- to C-terminus: Phosphoglucomutase (552 aa).

S143 (phosphoserine intermediate) is an active-site residue. Mg(2+)-binding residues include S143, D295, D297, and D299.

Belongs to the phosphohexose mutase family. Mg(2+) is required as a cofactor.

It carries out the reaction alpha-D-glucose 1-phosphate = alpha-D-glucose 6-phosphate. It functions in the pathway glycolipid metabolism; diglucosyl-diacylglycerol biosynthesis. In terms of biological role, catalyzes the interconversion between glucose-6-phosphate and alpha-glucose-1-phosphate. This is the first step in the biosynthesis of diglucosyl-diacylglycerol (Glc2-DAG), i.e. the predominant glycolipid found in the S.aureus membrane, which is also used as a membrane anchor for lipoteichoic acid (LTA). The chain is Phosphoglucomutase (pgcA) from Staphylococcus aureus (strain MSSA476).